A 244-amino-acid polypeptide reads, in one-letter code: MDVKIDILTLFPEMFHVFNYSIIGRAIEKNILSINTFNIRNFTENKHRKVDDYPYGGGSGMIMTAQPIVDCINSVKTQNKGNVVYLGPRGKIFDQSMAKKLSSEKELIFLCGHYEGIDERVYRYIDLEISIGDFIVTGGEMACIPIVDSICRMIPGVLSSTESYTEESFYNGVLEYPQYTRPEFFRGDRVPEVLISGHHENIRKWRRAKSFILTKNKRPDLFERIELSKEDRELIKLYENGYTD.

Residues Gly112 and 131–136 (IGDFIV) contribute to the S-adenosyl-L-methionine site.

It belongs to the RNA methyltransferase TrmD family. In terms of assembly, homodimer.

The protein resides in the cytoplasm. It catalyses the reaction guanosine(37) in tRNA + S-adenosyl-L-methionine = N(1)-methylguanosine(37) in tRNA + S-adenosyl-L-homocysteine + H(+). Specifically methylates guanosine-37 in various tRNAs. The protein is tRNA (guanine-N(1)-)-methyltransferase of Clostridium kluyveri (strain NBRC 12016).